A 156-amino-acid polypeptide reads, in one-letter code: Small ribosomal subunit protein uS7 (156 aa).

It belongs to the universal ribosomal protein uS7 family. Part of the 30S ribosomal subunit. Contacts proteins S9 and S11.

Functionally, one of the primary rRNA binding proteins, it binds directly to 16S rRNA where it nucleates assembly of the head domain of the 30S subunit. Is located at the subunit interface close to the decoding center, probably blocks exit of the E-site tRNA. This Aeromonas hydrophila subsp. hydrophila (strain ATCC 7966 / DSM 30187 / BCRC 13018 / CCUG 14551 / JCM 1027 / KCTC 2358 / NCIMB 9240 / NCTC 8049) protein is Small ribosomal subunit protein uS7.